The primary structure comprises 466 residues: 3-isopropylmalate dehydratase large subunit (466 aa).

[4Fe-4S] cluster contacts are provided by cysteine 347, cysteine 407, and cysteine 410.

The protein belongs to the aconitase/IPM isomerase family. LeuC type 1 subfamily. In terms of assembly, heterodimer of LeuC and LeuD. [4Fe-4S] cluster is required as a cofactor.

It catalyses the reaction (2R,3S)-3-isopropylmalate = (2S)-2-isopropylmalate. Its pathway is amino-acid biosynthesis; L-leucine biosynthesis; L-leucine from 3-methyl-2-oxobutanoate: step 2/4. Functionally, catalyzes the isomerization between 2-isopropylmalate and 3-isopropylmalate, via the formation of 2-isopropylmaleate. In Klebsiella pneumoniae subsp. pneumoniae (strain ATCC 700721 / MGH 78578), this protein is 3-isopropylmalate dehydratase large subunit.